The primary structure comprises 529 residues: Probable pectinesterase/pectinesterase inhibitor 35 (529 aa).

The first 34 residues, 1–34, serve as a signal peptide directing secretion; that stretch reads MATTSFSLPNHKFGIKLMLFLVLNLLSLQTSVFA. The segment at 36 to 180 is pectinesterase inhibitor 35; it reads SSNSKFTKIS…TGLLTNSLDM (145 aa). The interval 42-64 is disordered; sequence TKISRHPNSDSSSRTKPSTSSNK. Over residues 50-64 the composition is skewed to low complexity; sequence SDSSSRTKPSTSSNK. N-linked (GlcNAc...) asparagine glycans are attached at residues Asn86, Asn169, and Asn193. The interval 228–514 is pectinesterase 35; that stretch reads HAVVAADGSG…FTVSGFIDGN (287 aa). 2 residues coordinate substrate: Thr302 and Gln332. The active-site Proton donor; for pectinesterase activity is the Asp355. The Nucleophile; for pectinesterase activity role is filled by Asp376. Positions 434 and 436 each coordinate substrate.

This sequence in the N-terminal section; belongs to the PMEI family. In the C-terminal section; belongs to the pectinesterase family. Expressed in siliques.

It localises to the secreted. The protein resides in the cell wall. It catalyses the reaction [(1-&gt;4)-alpha-D-galacturonosyl methyl ester](n) + n H2O = [(1-&gt;4)-alpha-D-galacturonosyl](n) + n methanol + n H(+). It functions in the pathway glycan metabolism; pectin degradation; 2-dehydro-3-deoxy-D-gluconate from pectin: step 1/5. In terms of biological role, acts in the modification of cell walls via demethylesterification of cell wall pectin. The polypeptide is Probable pectinesterase/pectinesterase inhibitor 35 (PME35) (Arabidopsis thaliana (Mouse-ear cress)).